The chain runs to 488 residues: Proline--tRNA ligase (488 aa).

It belongs to the class-II aminoacyl-tRNA synthetase family. ProS type 3 subfamily. In terms of assembly, homodimer.

Its subcellular location is the cytoplasm. It carries out the reaction tRNA(Pro) + L-proline + ATP = L-prolyl-tRNA(Pro) + AMP + diphosphate. Catalyzes the attachment of proline to tRNA(Pro) in a two-step reaction: proline is first activated by ATP to form Pro-AMP and then transferred to the acceptor end of tRNA(Pro). This Pyrobaculum arsenaticum (strain DSM 13514 / JCM 11321 / PZ6) protein is Proline--tRNA ligase.